A 198-amino-acid chain; its full sequence is Recombination protein RecR (198 aa).

Residues 58 to 73 form a C4-type zinc finger; the sequence is CSVCGNFTDKDPCAIC. The 95-residue stretch at 81 to 175 folds into the Toprim domain; it reads NTICVVEHPK…KVTRIAHGIP (95 aa).

It belongs to the RecR family.

In terms of biological role, may play a role in DNA repair. It seems to be involved in an RecBC-independent recombinational process of DNA repair. It may act with RecF and RecO. The chain is Recombination protein RecR from Clostridium tetani (strain Massachusetts / E88).